We begin with the raw amino-acid sequence, 377 residues long: DNA-directed RNA polymerase subunit alpha (377 aa).

The segment at 1–259 (MSDSSHNLLY…KHFSVFEKMD (259 aa)) is alpha N-terminal domain (alpha-NTD). Residues 279 to 377 (ILHKLVLGIN…KIRSSKNTKG (99 aa)) are alpha C-terminal domain (alpha-CTD).

This sequence belongs to the RNA polymerase alpha chain family. In terms of assembly, homodimer. The RNAP catalytic core consists of 2 alpha, 1 beta, 1 beta' and 1 omega subunit. When a sigma factor is associated with the core the holoenzyme is formed, which can initiate transcription.

The enzyme catalyses RNA(n) + a ribonucleoside 5'-triphosphate = RNA(n+1) + diphosphate. Its function is as follows. DNA-dependent RNA polymerase catalyzes the transcription of DNA into RNA using the four ribonucleoside triphosphates as substrates. This is DNA-directed RNA polymerase subunit alpha from Chlamydia trachomatis serovar L2 (strain ATCC VR-902B / DSM 19102 / 434/Bu).